The primary structure comprises 459 residues: Cysteine--tRNA ligase (459 aa).

Cys28 lines the Zn(2+) pocket. A 'HIGH' region motif is present at residues 30 to 40 (VTIYDLCHIGH). Zn(2+) contacts are provided by Cys209, His234, and Glu238. Residues 266–270 (KMSKS) carry the 'KMSKS' region motif. Lys269 contacts ATP.

Belongs to the class-I aminoacyl-tRNA synthetase family. In terms of assembly, monomer. Zn(2+) serves as cofactor.

It localises to the cytoplasm. The enzyme catalyses tRNA(Cys) + L-cysteine + ATP = L-cysteinyl-tRNA(Cys) + AMP + diphosphate. The sequence is that of Cysteine--tRNA ligase from Shewanella loihica (strain ATCC BAA-1088 / PV-4).